Reading from the N-terminus, the 77-residue chain is Acyl carrier protein (77 aa).

Positions 2 to 77 constitute a Carrier domain; the sequence is SEKLQKIQAL…DAVAYIEERS (76 aa). O-(pantetheine 4'-phosphoryl)serine is present on Ser-37.

This sequence belongs to the acyl carrier protein (ACP) family. In terms of processing, 4'-phosphopantetheine is transferred from CoA to a specific serine of apo-ACP by AcpS. This modification is essential for activity because fatty acids are bound in thioester linkage to the sulfhydryl of the prosthetic group.

It is found in the cytoplasm. It functions in the pathway lipid metabolism; fatty acid biosynthesis. In terms of biological role, carrier of the growing fatty acid chain in fatty acid biosynthesis. This is Acyl carrier protein from Desulforudis audaxviator (strain MP104C).